A 382-amino-acid chain; its full sequence is Lycopene beta-cyclase (382 aa).

Position 6-36 (6-36 (DLILVGAGLANGLIALRLQQQQPDMRILLID)) interacts with NAD(+).

It belongs to the lycopene cyclase family. The cofactor is FAD.

It localises to the cell inner membrane. The enzyme catalyses a carotenoid psi-end group = a carotenoid beta-end derivative. The catalysed reaction is all-trans-lycopene = gamma-carotene. It catalyses the reaction gamma-carotene = all-trans-beta-carotene. It carries out the reaction all-trans-neurosporene = beta-zeacarotene. The enzyme catalyses beta-zeacarotene = 7,8-dihydro-beta-carotene. Its pathway is carotenoid biosynthesis; beta-carotene biosynthesis. Its activity is regulated as follows. Activity is increased in the presence of NAD(P)H. NADPH is not involved directly in the cyclization reaction, but must play an indirect role, e.g. as an allosteric activator. Functionally, catalyzes the double cyclization reaction which converts lycopene to beta-carotene. Also catalyzes the double cyclization reaction which converts neurosporene to 7,8-dihydro-beta-carotene via monocyclic beta-zeacarotene. May also convert zeta-carotene to bicyclic 7,8,7',8'-tetrahydro-beta-carotene. The polypeptide is Lycopene beta-cyclase (Pantoea ananas (Erwinia uredovora)).